The following is a 584-amino-acid chain: Probable pectinesterase/pectinesterase inhibitor (584 aa).

An N-terminal signal peptide occupies residues 1-22; the sequence is MAVGKIVISVASMLLVVGVAIG. The tract at residues 40 to 191 is pectinesterase inhibitor; it reads NSHQKAVESL…KILSSNAIDI (152 aa). Residues Asn91 and Asn105 are each glycosylated (N-linked (GlcNAc...) asparagine). Residues 246–267 form a disordered region; that stretch reads AQAGRPGAPADEGIGEGGGGGG. Residues 272–571 form a pectinesterase region; the sequence is THVVAKDGSG…TVANWLTPAN (300 aa). Substrate contacts are provided by Thr349 and Gln379. Catalysis depends on Asp402, which acts as the Proton donor; for pectinesterase activity. Asp423 (nucleophile; for pectinesterase activity) is an active-site residue. Residues Arg492 and Trp494 each contribute to the substrate site.

It in the N-terminal section; belongs to the PMEI family. This sequence in the C-terminal section; belongs to the pectinesterase family. Pollen, and at much lower levels in pistils and petals.

It localises to the secreted. Its subcellular location is the cell wall. The enzyme catalyses [(1-&gt;4)-alpha-D-galacturonosyl methyl ester](n) + n H2O = [(1-&gt;4)-alpha-D-galacturonosyl](n) + n methanol + n H(+). It functions in the pathway glycan metabolism; pectin degradation; 2-dehydro-3-deoxy-D-gluconate from pectin: step 1/5. In terms of biological role, acts in the modification of cell walls via demethylesterification of cell wall pectin. This Brassica napus (Rape) protein is Probable pectinesterase/pectinesterase inhibitor (BP19).